The primary structure comprises 120 residues: Large ribosomal subunit protein bL19c (120 aa).

Belongs to the bacterial ribosomal protein bL19 family.

It localises to the plastid. The protein resides in the chloroplast. This is Large ribosomal subunit protein bL19c from Thalassiosira pseudonana (Marine diatom).